A 274-amino-acid polypeptide reads, in one-letter code: NAD kinase (274 aa).

The Proton acceptor role is filled by D61. Residues 61-62 (DG), K66, 134-135 (ND), K145, D164, and 175-180 (TAYSLS) each bind NAD(+).

This sequence belongs to the NAD kinase family. It depends on a divalent metal cation as a cofactor.

It is found in the cytoplasm. The catalysed reaction is NAD(+) + ATP = ADP + NADP(+) + H(+). Involved in the regulation of the intracellular balance of NAD and NADP, and is a key enzyme in the biosynthesis of NADP. Catalyzes specifically the phosphorylation on 2'-hydroxyl of the adenosine moiety of NAD to yield NADP. The polypeptide is NAD kinase (Clostridium tetani (strain Massachusetts / E88)).